The sequence spans 276 residues: Undecaprenyl-diphosphatase (276 aa).

5 helical membrane-spanning segments follow: residues 84–104, 115–135, 188–208, 222–242, and 250–270; these read YRLG…GLFF, LWVV…AEYV, FGFL…LPDA, QLLV…AWLL, and MYWF…LLAT.

Belongs to the UppP family.

The protein resides in the cell membrane. The enzyme catalyses di-trans,octa-cis-undecaprenyl diphosphate + H2O = di-trans,octa-cis-undecaprenyl phosphate + phosphate + H(+). Its function is as follows. Catalyzes the dephosphorylation of undecaprenyl diphosphate (UPP). Confers resistance to bacitracin. In Mycobacterium bovis (strain ATCC BAA-935 / AF2122/97), this protein is Undecaprenyl-diphosphatase.